A 385-amino-acid chain; its full sequence is Tumor protein p53-inducible protein 13 (385 aa).

Positions 1 to 27 (MVHPPPPPPRLLLVALVGLLSLREVVA) are cleaved as a signal peptide. At 28 to 301 (EPAEEAGTPC…ARGPTPRTEE (274 aa)) the chain is on the extracellular side. Residues 242-297 (APVSLTTGGPGGNGRSRTEAQMPSGQGNHGGCACPGQVSPAPRAAGPPRVARGPTP) form a disordered region. A compositionally biased stretch (low complexity) spans 281–297 (PAPRAAGPPRVARGPTP). The helical transmembrane segment at 302–322 (AAWAAMALTFLLVLLTLATLC) threads the bilayer. Over 323–385 (TRLHRNFRRS…DSGPDSESSD (63 aa)) the chain is Cytoplasmic. The span at 359 to 369 (SRRIKRSRRRP) shows a compositional bias: basic residues. The disordered stretch occupies residues 359-385 (SRRIKRSRRRPLLPPTPDSGPDSESSD).

The protein resides in the cell membrane. Its subcellular location is the cytoplasm. May act as a tumor suppressor. Inhibits tumor cell growth, when overexpressed. The protein is Tumor protein p53-inducible protein 13 (Tp53i13) of Mus musculus (Mouse).